A 745-amino-acid chain; its full sequence is Phosphoribosylformylglycinamidine synthase subunit PurL (745 aa).

Residue His47 is part of the active site. Residues Tyr50 and Lys90 each contribute to the ATP site. Residue Glu92 participates in Mg(2+) binding. Substrate is bound by residues 93–96 and Arg115; that span reads SHNH. The Proton acceptor role is filled by His94. Asp116 is a Mg(2+) binding site. A substrate-binding site is contributed by Gln240. Residue Asp268 coordinates Mg(2+). Residue 312–314 participates in substrate binding; that stretch reads ESQ. Asn501 and Gly538 together coordinate ATP. Asn539 is a binding site for Mg(2+). Ser541 provides a ligand contact to substrate.

The protein belongs to the FGAMS family. As to quaternary structure, monomer. Part of the FGAM synthase complex composed of 1 PurL, 1 PurQ and 2 PurS subunits.

It is found in the cytoplasm. The catalysed reaction is N(2)-formyl-N(1)-(5-phospho-beta-D-ribosyl)glycinamide + L-glutamine + ATP + H2O = 2-formamido-N(1)-(5-O-phospho-beta-D-ribosyl)acetamidine + L-glutamate + ADP + phosphate + H(+). Its pathway is purine metabolism; IMP biosynthesis via de novo pathway; 5-amino-1-(5-phospho-D-ribosyl)imidazole from N(2)-formyl-N(1)-(5-phospho-D-ribosyl)glycinamide: step 1/2. Its function is as follows. Part of the phosphoribosylformylglycinamidine synthase complex involved in the purines biosynthetic pathway. Catalyzes the ATP-dependent conversion of formylglycinamide ribonucleotide (FGAR) and glutamine to yield formylglycinamidine ribonucleotide (FGAM) and glutamate. The FGAM synthase complex is composed of three subunits. PurQ produces an ammonia molecule by converting glutamine to glutamate. PurL transfers the ammonia molecule to FGAR to form FGAM in an ATP-dependent manner. PurS interacts with PurQ and PurL and is thought to assist in the transfer of the ammonia molecule from PurQ to PurL. In Leptospira interrogans serogroup Icterohaemorrhagiae serovar Lai (strain 56601), this protein is Phosphoribosylformylglycinamidine synthase subunit PurL.